We begin with the raw amino-acid sequence, 771 residues long: Heat shock transcription factor (771 aa).

Residues 1–70 (MTTNLYAIAG…GIGISKPGLS (70 aa)) are disordered. Low complexity-rich tracts occupy residues 11-23 (PSKPTTPTSTPSP) and 31-42 (LKSLTSLPTNPL). Polar residues predominate over residues 43–62 (NPQGTSTSNALTNQSSSTGI). Residues 78-168 (MKVPAFLNKL…PIELWEFANP (91 aa)) mediate DNA binding. Positions 183–266 (RKNNRLSNSG…PPSHTSAGPL (84 aa)) are disordered. Low complexity-rich tracts occupy residues 189–199 (SNSGVGSSSSL) and 212–233 (SASAAAASGSGSGQIQQAISQG). Residues 238 to 262 (NHSTSGKYLITDGTTPGSAPPSHTS) are compositionally biased toward polar residues. An involved in trimerization region spans residues 280-333 (GIAAIRQTQASIATDLRKLQASNEALWRQAYETQEKQRKHEETIDLIVSFLERL). Composition is skewed to basic and acidic residues over residues 350 to 372 (RGVGVRRDRDGREGRDSRDARFA) and 399 to 415 (TGEHGEIESPSSDDRLV). Disordered regions lie at residues 350-513 (RGVG…SSNA), 590-634 (QALT…GSGT), and 708-771 (SGVG…SGLK). Residues 418 to 448 (GSNSEYSIPSVKRTSSSSHPLSLGQLGSSRF) show a composition bias toward polar residues. 2 stretches are compositionally biased toward low complexity: residues 497-511 (LSPLSDTDPLLPSSS) and 599-620 (HNPSLLNPNPNGNASTSASASA).

Belongs to the HSF family. Homotrimer. Homotrimerization increases the affinity of HSF1 to DNA. Interacts with transcriptional coregulator SSA1 on chromatin. Post-translationally, phosphorylated at high temperature.

The protein localises to the nucleus. DNA-binding transcription factor that specifically binds heat shock promoter elements (HSE) and activates transcription. Promotes thermotolerance by transiently regulating a subset of genes. Induces expression of STI, SSA1, SSA2, HSP78 and KAR2 during the heat response. This Cryptococcus neoformans var. grubii serotype A (strain H99 / ATCC 208821 / CBS 10515 / FGSC 9487) (Filobasidiella neoformans var. grubii) protein is Heat shock transcription factor.